Consider the following 388-residue polypeptide: Proline-rich protein 5 (388 aa).

Interaction with RICTOR regions lie at residues 10 to 95 and 188 to 218; these read MSSP…LTKG and HESRGVTEDYLRLETLVQKVVSPYLGTYGLH. The interval 12–31 is disordered; it reads SPSLSDLGKREPAAAADERG. A compositionally biased stretch (basic and acidic residues) spans 18-31; that stretch reads LGKREPAAAADERG. The residue at position 252 (serine 252) is a Phosphoserine. The disordered stretch occupies residues 254 to 388; it reads SYNTPLLNPV…EGSGGRQSVV (135 aa). Positions 336 to 346 are enriched in polar residues; it reads TRSSLPRSSPE.

It belongs to the PROTOR family. In terms of assembly, associated component of the mechanistic target of rapamycin complex 2 (mTORC2). Binds directly to MTOR and RICTOR within the TORC2 complex. As to expression, most abundant in kidney and liver. Also highly expressed in brain, spleen, testis and placenta. Overexpressed in several colorectal tumors.

Functionally, associated subunit of mTORC2, which regulates cell growth and survival in response to hormonal signals. mTORC2 is activated by growth factors, but, in contrast to mTORC1, seems to be nutrient-insensitive. mTORC2 seems to function upstream of Rho GTPases to regulate the actin cytoskeleton, probably by activating one or more Rho-type guanine nucleotide exchange factors. PRR5 plays an important role in regulation of PDGFRB expression and in modulation of platelet-derived growth factor signaling. May act as a tumor suppressor in breast cancer. This Homo sapiens (Human) protein is Proline-rich protein 5 (PRR5).